The primary structure comprises 807 residues: MEDLKTVEASDNVVSDNVEKVNPELIDSTIRESNIQSATKVDNIPQSQTDTEETQQSQTDTEETQQSQTDDTTGNAKIYVDDTFSPSDAATAAVLTGKDSTSTTIVEEVMEPDEIGLPSVKITEAATGTARNGGGSPRTVSSPRFSGSPVSTGTPKNVDSHRGLIDTAAPFESVKEAVSKFGGITDWKSHRMQAVERRKLIEEELKKIHEEIPEYKTHSETAEAAKLQVLKELESTKRLIEQLKLNLDKAQTEEQQAKQDSELAKLRVEEMEQGIAEDVSVAAKAQLEVAKARHTTAITELSSVKEELETLHKEYDALVQDKDVAVKKVEEAMLASKEVEKTVEELTIELIATKESLESAHASHLEAEEQRIGAAMARDQDTHRWEKELKQAEEELQRLNQQIHSSKDLKSKLDTASALLLDLKAELVAYMESKLKQEACDSTTNTDPSTENMSHPDLHAAVASAKKELEEVNVNIEKAAAEVSCLKLASSSLQLELEKEKSTLASIKQREGMASIAVASIEAEIDRTRSEIASVQSKEKDAREKMVELPKQLQQAAEEADEAKSLAEVAREELRKAKEEAEQAKAGASTMESRLFAAQKEIEAAKASERLALAAIKALEESESTLKANDTDSPRSVTLSLEEYYELSKRAHEAEELANARVAAAVSRIEEAKETEMRSLEKLEEVNRDMDARKKALKEATEKAEKAKEGKLGVEQELRKWRAEHEQKRKAGDGVNTEKNLKESFEGGKMEQSPEAVVYASSPSESYGTEENSETNLSPQTKSRKKKKKLSFPRFFMFLSKKKSHNN.

The segment at 1-162 (MEDLKTVEAS…GTPKNVDSHR (162 aa)) is disordered. Residues 31-40 (RESNIQSATK) are compositionally biased toward polar residues. Low complexity predominate over residues 46–73 (QSQTDTEETQQSQTDTEETQQSQTDDTT). Residues 138 to 157 (RTVSSPRFSGSPVSTGTPKN) are compositionally biased toward polar residues. Serine 148 bears the Phosphoserine mark. 4 coiled-coil regions span residues 191 to 429 (RMQA…ELVA), 457 to 489 (DLHA…LKLA), 516 to 621 (IAVA…ALEE), and 664 to 724 (AAVS…WRAE). Disordered regions lie at residues 532–565 (IASV…EAKS) and 722–789 (RAEH…KKKK). 3 stretches are compositionally biased toward basic and acidic residues: residues 537 to 548 (SKEKDAREKMVE), 722 to 732 (RAEHEQKRKAG), and 739 to 749 (KNLKESFEGGK). Over residues 761 to 781 (SSPSESYGTEENSETNLSPQT) the composition is skewed to polar residues.

This sequence belongs to the WEB family. As to quaternary structure, interacts with PMI2. Ubiquitous but preferentially in chloroplast-containing tissues.

The protein localises to the cytoplasm. Functionally, required for the chloroplast avoidance response under high intensity blue light. This avoidance response consists in the relocation of chloroplasts on the anticlinal side of exposed cells. Acts in association with PMI2 to maintain the velocity of chloroplast photorelocation movement via cp-actin filaments regulation. The chain is Protein WEAK CHLOROPLAST MOVEMENT UNDER BLUE LIGHT 1 (WEB1) from Arabidopsis thaliana (Mouse-ear cress).